A 447-amino-acid chain; its full sequence is Probable aspartic protease At2g35615 (447 aa).

The signal sequence occupies residues 1 to 20 (MATQILLCFFLFFSVTLSSS). Asn-25 is a glycosylation site (N-linked (GlcNAc...) asparagine). In terms of domain architecture, Peptidase A1 spans 85–439 (FFMSITIGTP…DLETRTVSFQ (355 aa)). Asp-103 is a catalytic residue. Asn-251 carries an N-linked (GlcNAc...) asparagine glycan. Asp-326 is a catalytic residue.

This sequence belongs to the peptidase A1 family.

It localises to the secreted. This chain is Probable aspartic protease At2g35615, found in Arabidopsis thaliana (Mouse-ear cress).